The following is a 344-amino-acid chain: Dihydroorotase (344 aa).

H14 and H16 together coordinate Zn(2+). Substrate contacts are provided by residues 16–18 and N42; that span reads HLR. Residues K100, H137, and H175 each contribute to the Zn(2+) site. K100 carries the post-translational modification N6-carboxylysine. H137 provides a ligand contact to substrate. Position 220 (L220) interacts with substrate. D248 lines the Zn(2+) pocket. The active site involves D248. Positions 252 and 264 each coordinate substrate.

It belongs to the metallo-dependent hydrolases superfamily. DHOase family. Class II DHOase subfamily. In terms of assembly, homodimer. The cofactor is Zn(2+).

The enzyme catalyses (S)-dihydroorotate + H2O = N-carbamoyl-L-aspartate + H(+). It functions in the pathway pyrimidine metabolism; UMP biosynthesis via de novo pathway; (S)-dihydroorotate from bicarbonate: step 3/3. Its function is as follows. Catalyzes the reversible cyclization of carbamoyl aspartate to dihydroorotate. The sequence is that of Dihydroorotase from Cupriavidus metallidurans (strain ATCC 43123 / DSM 2839 / NBRC 102507 / CH34) (Ralstonia metallidurans).